Reading from the N-terminus, the 143-residue chain is Large ribosomal subunit protein uL11 (143 aa).

The protein belongs to the universal ribosomal protein uL11 family. In terms of assembly, part of the ribosomal stalk of the 50S ribosomal subunit. Interacts with L10 and the large rRNA to form the base of the stalk. L10 forms an elongated spine to which L12 dimers bind in a sequential fashion forming a multimeric L10(L12)X complex. In terms of processing, one or more lysine residues are methylated.

In terms of biological role, forms part of the ribosomal stalk which helps the ribosome interact with GTP-bound translation factors. The sequence is that of Large ribosomal subunit protein uL11 from Albidiferax ferrireducens (strain ATCC BAA-621 / DSM 15236 / T118) (Rhodoferax ferrireducens).